Consider the following 1761-residue polypeptide: Nonribosomal peptide synthetase 6 (1761 aa).

Positions 63–468 are adenylation; the sequence is ERAALHPEKI…GRQDQQVKLR (406 aa). In terms of domain architecture, Carrier 1 spans 600–675; it reads EATTEMELKL…AMAEKAKPVS (76 aa). O-(pantetheine 4'-phosphoryl)serine is present on Ser636. The segment at 712–1135 is condensation 1; the sequence is VEDVYPCTPL…AVLDPAEARD (424 aa). Carrier domains lie at 1169–1242 and 1237–1313; these read SPNE…SNER and SASN…EEEM. Ser1203 and Ser1274 each carry O-(pantetheine 4'-phosphoryl)serine. Residues 1354 to 1677 form a condensation 2 region; the sequence is IYPTRPLQQL…DKVQWFDTVV (324 aa).

This sequence belongs to the NRP synthetase family.

Its pathway is siderophore biosynthesis. In terms of biological role, NRPS involved in extracellular coprogen-type siderophores biosynthesis including coprogen, neocoprogen I and neocoprogen II. The role of extracellular siderophores in fungal virulence to plants is to supply iron to the fungus during plant infection, but not to act as phytotoxins, depriving their hosts of iron. This is Nonribosomal peptide synthetase 6 from Cochliobolus miyabeanus (Brown spot disease fungus).